A 206-amino-acid chain; its full sequence is Superoxide dismutase [Mn] (206 aa).

4 residues coordinate Mn(2+): H27, H82, D168, and H172.

The protein belongs to the iron/manganese superoxide dismutase family. In terms of assembly, homodimer. Mn(2+) is required as a cofactor.

The enzyme catalyses 2 superoxide + 2 H(+) = H2O2 + O2. Functionally, destroys superoxide anion radicals which are normally produced within the cells and which are toxic to biological systems. The sequence is that of Superoxide dismutase [Mn] (sodA) from Escherichia coli O157:H7.